The following is a 371-amino-acid chain: Bifunctional enzyme IspD/IspF (371 aa).

The interval 1–210 (MSEISLIMLA…LDLPTPSFEI (210 aa)) is 2-C-methyl-D-erythritol 4-phosphate cytidylyltransferase. The segment at 211–371 (FTGNGFDVHE…NLKYFDWTRL (161 aa)) is 2-C-methyl-D-erythritol 2,4-cyclodiphosphate synthase. 2 residues coordinate a divalent metal cation: Asp217 and His219. Residues 217–219 (DVH) and 243–244 (HS) contribute to the 4-CDP-2-C-methyl-D-erythritol 2-phosphate site. Residue His251 coordinates a divalent metal cation. Residues 265–267 (DIG), 270–274 (YPDTD), 341–344 (TTTE), Phe348, and Arg351 each bind 4-CDP-2-C-methyl-D-erythritol 2-phosphate.

This sequence in the N-terminal section; belongs to the IspD/TarI cytidylyltransferase family. IspD subfamily. It in the C-terminal section; belongs to the IspF family. A divalent metal cation serves as cofactor.

It catalyses the reaction 2-C-methyl-D-erythritol 4-phosphate + CTP + H(+) = 4-CDP-2-C-methyl-D-erythritol + diphosphate. The enzyme catalyses 4-CDP-2-C-methyl-D-erythritol 2-phosphate = 2-C-methyl-D-erythritol 2,4-cyclic diphosphate + CMP. It participates in isoprenoid biosynthesis; isopentenyl diphosphate biosynthesis via DXP pathway; isopentenyl diphosphate from 1-deoxy-D-xylulose 5-phosphate: step 2/6. It functions in the pathway isoprenoid biosynthesis; isopentenyl diphosphate biosynthesis via DXP pathway; isopentenyl diphosphate from 1-deoxy-D-xylulose 5-phosphate: step 4/6. Functionally, bifunctional enzyme that catalyzes the formation of 4-diphosphocytidyl-2-C-methyl-D-erythritol from CTP and 2-C-methyl-D-erythritol 4-phosphate (MEP) (IspD), and catalyzes the conversion of 4-diphosphocytidyl-2-C-methyl-D-erythritol 2-phosphate (CDP-ME2P) to 2-C-methyl-D-erythritol 2,4-cyclodiphosphate (ME-CPP) with a corresponding release of cytidine 5-monophosphate (CMP) (IspF). This Campylobacter jejuni subsp. jejuni serotype O:23/36 (strain 81-176) protein is Bifunctional enzyme IspD/IspF.